The chain runs to 485 residues: Membrane-bound lytic murein transglycosylase F (485 aa).

Residues 1–29 (MFAHTALRQRCAKWLFATGLFLLLGACVE) form the signal peptide. The interval 30–267 (KPSTLERVKE…RLKDRYYGHV (238 aa)) is non-LT domain. Positions 268–485 (DVLGYVGAYT…DKPADQSPPM (218 aa)) are LT domain. Glu314 is an active-site residue. Residues 465-485 (EGNLHVPGVNKDKPADQSPPM) are disordered.

This sequence in the N-terminal section; belongs to the bacterial solute-binding protein 3 family. The protein in the C-terminal section; belongs to the transglycosylase Slt family.

The protein localises to the cell outer membrane. It carries out the reaction Exolytic cleavage of the (1-&gt;4)-beta-glycosidic linkage between N-acetylmuramic acid (MurNAc) and N-acetylglucosamine (GlcNAc) residues in peptidoglycan, from either the reducing or the non-reducing ends of the peptidoglycan chains, with concomitant formation of a 1,6-anhydrobond in the MurNAc residue.. Its function is as follows. Murein-degrading enzyme that degrades murein glycan strands and insoluble, high-molecular weight murein sacculi, with the concomitant formation of a 1,6-anhydromuramoyl product. Lytic transglycosylases (LTs) play an integral role in the metabolism of the peptidoglycan (PG) sacculus. Their lytic action creates space within the PG sacculus to allow for its expansion as well as for the insertion of various structures such as secretion systems and flagella. This is Membrane-bound lytic murein transglycosylase F from Pseudomonas putida (strain GB-1).